A 523-amino-acid chain; its full sequence is Membrane protein PTM1 (523 aa).

The first 26 residues, 1 to 26 (MRVYQFCRPFQLFTYFLCYLLVFVKA), serve as a signal peptide directing secretion. Topologically, residues 27-197 (NKEKISQKNY…LAGTEINKLP (171 aa)) are lumenal. Asparagine 132 carries N-linked (GlcNAc...) asparagine glycosylation. A helical membrane pass occupies residues 198–218 (LYGLLAVAYVVAMALYSFAFW). The Cytoplasmic portion of the chain corresponds to 219-230 (KHKHELLPLQKY). The helical transmembrane segment at 231-251 (LLAFFVFLTAETIFVWAYYDL) threads the bilayer. Topologically, residues 252-265 (KNEKGDTAGIKVYM) are lumenal. The helical transmembrane segment at 266–286 (VFLSILTAGKVTFSFFLLLII) threads the bilayer. Over 287-304 (ALGYGIVYPKLNKTLMRR) the chain is Cytoplasmic. The chain crosses the membrane as a helical span at residues 305-325 (CQMYGALTYAICIGFLIQSYL). Residues 326 to 333 (TDMEAPSP) are Lumenal-facing. A helical transmembrane segment spans residues 334–354 (LILITLIPMALALIIFYYMII). The Cytoplasmic portion of the chain corresponds to 355 to 381 (RSMTKTVIYLKEQRQIVKLNMYKKLLY). Residues 382-402 (IIYASFLSVLAGSIVSSFIYV) form a helical membrane-spanning segment. The Lumenal segment spans residues 403 to 417 (GMNTIDMIEKNWRSR). A helical transmembrane segment spans residues 418–438 (FFVTDFWPTLVYFIVFVTIAF). Residues 439–523 (LWRPTDTSYM…HGPVSPSPTK (85 aa)) are Cytoplasmic-facing. Serine 480 carries the post-translational modification Phosphoserine. Residues threonine 483 and threonine 498 each carry the phosphothreonine modification. Residues 483–523 (TGERGIDEDDLNLNFTDDEEGHDNVNNHSQGHGPVSPSPTK) are disordered. The span at 488 to 503 (IDEDDLNLNFTDDEEG) shows a compositional bias: acidic residues.

This sequence belongs to the LU7TM family.

It is found in the golgi apparatus membrane. The protein resides in the early endosome membrane. This is Membrane protein PTM1 (PTM1) from Saccharomyces cerevisiae (strain YJM789) (Baker's yeast).